We begin with the raw amino-acid sequence, 138 residues long: Small ribosomal subunit protein uS12 (138 aa).

The disordered stretch occupies residues 33–55 (KEHTNVSSPQKRGVCTRVGTMTP).

The protein belongs to the universal ribosomal protein uS12 family. As to quaternary structure, part of the 30S ribosomal subunit. Contacts proteins S8 and S17. May interact with IF1 in the 30S initiation complex. Interacts with BrxC.

In terms of biological role, with S4 and S5 plays an important role in translational accuracy. Its function is as follows. Interacts with and stabilizes bases of the 16S rRNA that are involved in tRNA selection in the A site and with the mRNA backbone. Located at the interface of the 30S and 50S subunits, it traverses the body of the 30S subunit contacting proteins on the other side and probably holding the rRNA structure together. The combined cluster of proteins S8, S12 and S17 appears to hold together the shoulder and platform of the 30S subunit. This is Small ribosomal subunit protein uS12 (rpsL) from Bacillus subtilis (strain 168).